The sequence spans 93 residues: uncharacterized protein (93 aa).

A run of 3 helical transmembrane segments spans residues 15-35 (MAGL…VMLV), 48-68 (ILAI…IYQI), and 72-92 (LSYA…AGVH).

The protein localises to the cell membrane. This is an uncharacterized protein from Bacillus subtilis (strain 168).